The primary structure comprises 52 residues: Large ribosomal subunit protein bL32c (52 aa).

This sequence belongs to the bacterial ribosomal protein bL32 family.

The protein resides in the plastid. It localises to the chloroplast. This chain is Large ribosomal subunit protein bL32c, found in Capsella bursa-pastoris (Shepherd's purse).